Reading from the N-terminus, the 78-residue chain is Exodeoxyribonuclease 7 small subunit (78 aa).

Belongs to the XseB family. Heterooligomer composed of large and small subunits.

The protein resides in the cytoplasm. It catalyses the reaction Exonucleolytic cleavage in either 5'- to 3'- or 3'- to 5'-direction to yield nucleoside 5'-phosphates.. Bidirectionally degrades single-stranded DNA into large acid-insoluble oligonucleotides, which are then degraded further into small acid-soluble oligonucleotides. The protein is Exodeoxyribonuclease 7 small subunit of Idiomarina loihiensis (strain ATCC BAA-735 / DSM 15497 / L2-TR).